A 482-amino-acid chain; its full sequence is MKVLPASGLAVLVTALKFATADPNLLAATPRTFRSNYHLAQAYLDKYYTKKGGPQAGEMVARESNPMIRRIKELQIFFGLKVTGKLDQNTMNVIKKPRCGVPDVANYRLFPGEPKWKKNILTYRISKYTPSMSPTEVDKAIQMALHAWSTAVPLNFVRINSGEADIMISFETGDHGDSYPFDGPRGTLAHAFAPGEGLGGDTHFDNAEKWTMGTNGFNLFTVAAHEFGHALGLGHSTDPSALMYPTYKYQNPYRFHLPKDDVKGIQALYGPRKIFPGKPTMPHIPPHKPSIPDLCDSSSSFDAVTMLGKELLFFKDRIFWRRQVHLPTGIRPSTITSSFPQLMSNVDAAYEVAERGIAFFFKGPHYWVTRGFHMQGPPRTIYDFGFPRHVQRIDAAVYLKEPQKTLFFVGEEYYSYDERKKKMEKDYPKNTEEEFSGVSGHIDAAVELNGYIYFFSGRKTFKYDTEKEDVVSVVKSSSWIGC.

Residues 1–21 (MKVLPASGLAVLVTALKFATA) form the signal peptide. Positions 22 to 106 (DPNLLAATPR…PRCGVPDVAN (85 aa)) are excised as a propeptide. The Cysteine switch signature appears at 97 to 104 (PRCGVPDV). Residue cysteine 99 coordinates Zn(2+). Ca(2+) contacts are provided by glutamate 163, alanine 164, and aspartate 165. Zn(2+)-binding residues include histidine 175 and aspartate 177. Ca(2+) contacts are provided by aspartate 182, glycine 183, arginine 185, and threonine 187. Histidine 190 serves as a coordination point for Zn(2+). Ca(2+)-binding residues include glutamate 196, glycine 197, glycine 199, and aspartate 201. Histidine 203 is a Zn(2+) binding site. Residues aspartate 205 and glutamate 208 each coordinate Ca(2+). Zn(2+) is bound at residue histidine 225. Glutamate 226 is an active-site residue. Zn(2+)-binding residues include histidine 229 and histidine 235. 4 Hemopexin repeats span residues 292–342 (PDLC…FPQL), 343–388 (MSNV…GFPR), 390–438 (VQRI…FSGV), and 439–482 (SGHI…WIGC). Cysteine 295 and cysteine 482 are joined by a disulfide.

Belongs to the peptidase M10A family. The cofactor is Zn(2+). Ca(2+) is required as a cofactor. Post-translationally, autoactivates at least at the 106-Asn-|-Tyr-107 site. As to expression, expressed in the enamel organ.

It localises to the secreted. It is found in the extracellular space. Its subcellular location is the extracellular matrix. Functionally, degrades amelogenin, the major protein component of the enamel matrix and two of the macromolecules characterizing the cartilage extracellular matrix: aggrecan and the cartilage oligomeric matrix protein (COMP). May play a central role in tooth enamel formation. Cleaves aggrecan at the '360-Asn-|-Phe-361' site. This is Matrix metalloproteinase-20 (Mmp20) from Mus musculus (Mouse).